Consider the following 183-residue polypeptide: ATP synthase subunit delta (183 aa).

This sequence belongs to the ATPase delta chain family. As to quaternary structure, F-type ATPases have 2 components, F(1) - the catalytic core - and F(0) - the membrane proton channel. F(1) has five subunits: alpha(3), beta(3), gamma(1), delta(1), epsilon(1). F(0) has three main subunits: a(1), b(2) and c(10-14). The alpha and beta chains form an alternating ring which encloses part of the gamma chain. F(1) is attached to F(0) by a central stalk formed by the gamma and epsilon chains, while a peripheral stalk is formed by the delta and b chains.

The protein resides in the cell inner membrane. F(1)F(0) ATP synthase produces ATP from ADP in the presence of a proton or sodium gradient. F-type ATPases consist of two structural domains, F(1) containing the extramembraneous catalytic core and F(0) containing the membrane proton channel, linked together by a central stalk and a peripheral stalk. During catalysis, ATP synthesis in the catalytic domain of F(1) is coupled via a rotary mechanism of the central stalk subunits to proton translocation. In terms of biological role, this protein is part of the stalk that links CF(0) to CF(1). It either transmits conformational changes from CF(0) to CF(1) or is implicated in proton conduction. The protein is ATP synthase subunit delta of Verminephrobacter eiseniae (strain EF01-2).